Reading from the N-terminus, the 93-residue chain is Leydig cell tumor 10 kDa protein (93 aa).

Positions 1–41 (MAQGQRKFQAQKPKSKAAAAERSRGPRKGGRVIGPKKARVV) are disordered. Positions 7 to 18 (KFQAQKPKSKAA) are enriched in low complexity. The segment covering 25–39 (GPRKGGRVIGPKKAR) has biased composition (basic residues).

The protein belongs to the UPF0390 family. In terms of tissue distribution, leydig cell tumor, testis and placenta.

In terms of biological role, may have a potential role in hypercalcemia of malignancy. The sequence is that of Leydig cell tumor 10 kDa protein from Rattus norvegicus (Rat).